The primary structure comprises 318 residues: MATAAAGVAAALSPLSGRDYLSSADCSAEETSAVLDLAAQLKSGDRRIDLGNRVLGLIFTKASTRTRVSFQVAMARLGGQTVDLNPKVTQLGRGEPLEDTARVLSRYCDVLAVRTFAQQELVDYAHWATVPVINALTDLEHPCQSLADFLTMREAHGDLPGQTLAYIGDGNNVAHSLMLCGALLGVNVRIGCPQGFEPLPGVLEQARSLAVQGASIEVIHDPREAVRGAQAVYTDVWASMGQEDEQSEREQAFAGFCVDEALMEAADTEAIVLHCLPAHRGEEISPGVMESSASRIFDQAENRLHAQQALLAALMGGL.

Carbamoyl phosphate contacts are provided by residues serine 63 to threonine 66, glutamine 90, arginine 114, and histidine 141 to glutamine 144. L-ornithine is bound by residues asparagine 172, aspartate 235, and serine 239–methionine 240. Carbamoyl phosphate contacts are provided by residues cysteine 275–leucine 276 and arginine 303.

The protein belongs to the aspartate/ornithine carbamoyltransferase superfamily. OTCase family.

The protein localises to the cytoplasm. It carries out the reaction carbamoyl phosphate + L-ornithine = L-citrulline + phosphate + H(+). The protein operates within amino-acid biosynthesis; L-arginine biosynthesis; L-arginine from L-ornithine and carbamoyl phosphate: step 1/3. Functionally, reversibly catalyzes the transfer of the carbamoyl group from carbamoyl phosphate (CP) to the N(epsilon) atom of ornithine (ORN) to produce L-citrulline. This Parasynechococcus marenigrum (strain WH8102) protein is Ornithine carbamoyltransferase.